We begin with the raw amino-acid sequence, 727 residues long: Rho-related BTB domain-containing protein 2 (727 aa).

Residues Met-1 to Ser-210 form a rho-like region. GTP contacts are provided by residues Gly-21–Thr-28, Asp-84–Asp-88, and Cys-140–Asp-143. BTB domains follow at residues Ala-266–Glu-442 and Ser-500–Pro-567. Residues Glu-304–His-333 form a disordered region. A compositionally biased stretch (basic and acidic residues) spans His-315 to Asp-324. Residues Phe-703–Val-727 form a disordered region. The span at Ser-706–Val-727 shows a compositional bias: low complexity.

This sequence belongs to the small GTPase superfamily. Rho family. As to quaternary structure, interacts with HSP90AA1 and HSP90AB1. Forms a complex with CUL3 and RBX1. Interacts (via BTB 1 domain) with CUL3. Interacts with MSI2. In terms of processing, autoubiquitinated by RHOBTB2-CUL3-RBX1 ubiquitin ligase complex. As to expression, ubiquitous, with highest levels in neural tissues. Expression is also detected in fetal lung, heart, and brain.

Its function is as follows. Regulator of cell proliferation and apoptosis. It likely functions as a substrate-adapter that recruits key substrates, e.g. MSI2, to CUL3-based ubiquitin ligase complexes for degradation. Required for MSI2 ubiquitination and degradation. The chain is Rho-related BTB domain-containing protein 2 (RHOBTB2) from Homo sapiens (Human).